Here is a 103-residue protein sequence, read N- to C-terminus: N(4)-acetylcytidine amidohydrolase (103 aa).

The ASCH domain occupies isoleucine 6–glutamine 94. Lysine 21 functions as the Proton acceptor in the catalytic mechanism. Threonine 24 acts as the Nucleophile in catalysis. Glutamate 74 serves as the catalytic Proton donor.

Belongs to the N(4)-acetylcytidine amidohydrolase family.

It carries out the reaction N(4)-acetylcytidine + H2O = cytidine + acetate + H(+). It catalyses the reaction N(4)-acetyl-2'-deoxycytidine + H2O = 2'-deoxycytidine + acetate + H(+). The enzyme catalyses N(4)-acetylcytosine + H2O = cytosine + acetate + H(+). Catalyzes the hydrolysis of N(4)-acetylcytidine (ac4C). This Citrobacter koseri (strain ATCC BAA-895 / CDC 4225-83 / SGSC4696) protein is N(4)-acetylcytidine amidohydrolase.